The sequence spans 417 residues: Carbon catabolite repressor protein 4 homolog 4 (417 aa).

Phe-2 carries the N-acetylserine modification. Glu-143 is a Mg(2+) binding site.

The protein belongs to the CCR4/nocturin family. In terms of assembly, component of the CCR4-NOT complex, at least composed of CRR4 and CAF1 proteins. Forms homooligomers. The cofactor is Mg(2+).

It localises to the nucleus. The protein localises to the cytoplasm. The enzyme catalyses Exonucleolytic cleavage of poly(A) to 5'-AMP.. Acts as a catalytic component of the CCR4-NOT core complex, which in the nucleus seems to be a general transcription factor, and in the cytoplasm the major mRNA deadenylase involved in mRNA turnover. Transcriptional regulator of circadian rhythms with poly(A)-degrading activity that affects the expression and rhythmicity of the clock core oscillator genes TOC1 and CCA1. Deadenylation may be a mechanism involved in the regulation of the circadian clock. May play a negative role in response against oxidative stress. Possesses magnesium-dependent poly(A)-specific exoribonuclease activity in vitro and is almost inactive with poly(U), poly(C) and poly(G) as substrates. The sequence is that of Carbon catabolite repressor protein 4 homolog 4 from Arabidopsis thaliana (Mouse-ear cress).